A 199-amino-acid polypeptide reads, in one-letter code: Fe/S biogenesis protein NfuA (199 aa).

[4Fe-4S] cluster-binding residues include Cys151 and Cys154.

It belongs to the NfuA family. As to quaternary structure, homodimer. [4Fe-4S] cluster is required as a cofactor.

Involved in iron-sulfur cluster biogenesis. Binds a 4Fe-4S cluster, can transfer this cluster to apoproteins, and thereby intervenes in the maturation of Fe/S proteins. Could also act as a scaffold/chaperone for damaged Fe/S proteins. The protein is Fe/S biogenesis protein NfuA of Xanthomonas campestris pv. campestris (strain 8004).